The primary structure comprises 440 residues: Thymidine phosphorylase (440 aa).

The protein belongs to the thymidine/pyrimidine-nucleoside phosphorylase family. In terms of assembly, homodimer.

It carries out the reaction thymidine + phosphate = 2-deoxy-alpha-D-ribose 1-phosphate + thymine. The protein operates within pyrimidine metabolism; dTMP biosynthesis via salvage pathway; dTMP from thymine: step 1/2. Its function is as follows. The enzymes which catalyze the reversible phosphorolysis of pyrimidine nucleosides are involved in the degradation of these compounds and in their utilization as carbon and energy sources, or in the rescue of pyrimidine bases for nucleotide synthesis. This Salmonella choleraesuis (strain SC-B67) protein is Thymidine phosphorylase.